The chain runs to 91 residues: Auxin-responsive protein SAUR20 (91 aa).

The protein belongs to the ARG7 family.

The protein localises to the cell membrane. Functions as a positive effector of cell expansion through modulation of auxin transport. The polypeptide is Auxin-responsive protein SAUR20 (Arabidopsis thaliana (Mouse-ear cress)).